Here is a 102-residue protein sequence, read N- to C-terminus: Large ribosomal subunit protein bL21 (102 aa).

It belongs to the bacterial ribosomal protein bL21 family. As to quaternary structure, part of the 50S ribosomal subunit. Contacts protein L20.

This protein binds to 23S rRNA in the presence of protein L20. The protein is Large ribosomal subunit protein bL21 of Geotalea uraniireducens (strain Rf4) (Geobacter uraniireducens).